The primary structure comprises 344 residues: MKDVTIIGGGPSGLYASFYAGLRDMSVRLIDVQSELGGKMRIYPEKIIWDIGGIAPKPCHEILKDTIKQGLYFKPEVHLNERVVDIRKKAERHFEVETEAGEIYTSKAVIIAIGAGIINPKQLDVKGVERYQLTNLHYVVQSYRRFKDKDVLISGGGNTALDWAHDIAKIAKSVTVVYRKEDVSGHEAMKTLVTDLNVKLCPKTRIKYLVGNDDETHISEVVLEHVESGDTHTVKFDDVIISHGFDRCNTLLSETSSKLDMHDDCRVKGFGNTTTSIPGIYACGDIVYHDAKSHLIASAFSDGANAANLAKTYIQPDANAEGYVSSHHEVFKEANKTIVNKHLY.

The FAD site is built by S12, D31, K39, Y43, V83, I118, D285, and S326.

Belongs to the ferredoxin--NADP reductase type 2 family. Homodimer. The cofactor is FAD.

It catalyses the reaction 2 reduced [2Fe-2S]-[ferredoxin] + NADP(+) + H(+) = 2 oxidized [2Fe-2S]-[ferredoxin] + NADPH. This chain is Ferredoxin--NADP reductase, found in Staphylococcus aureus (strain MW2).